The primary structure comprises 409 residues: Phosphoglycerate kinase (409 aa).

Residues 23–25 (DIN), 63–66 (HQSR), Arg120, and Arg160 each bind substrate. ATP is bound by residues Glu333 and 359–362 (GGHL).

The protein belongs to the phosphoglycerate kinase family. In terms of assembly, monomer.

It localises to the cytoplasm. The enzyme catalyses (2R)-3-phosphoglycerate + ATP = (2R)-3-phospho-glyceroyl phosphate + ADP. It functions in the pathway carbohydrate degradation; glycolysis; pyruvate from D-glyceraldehyde 3-phosphate: step 2/5. This is Phosphoglycerate kinase (pgk) from Methanobacterium bryantii.